A 236-amino-acid polypeptide reads, in one-letter code: EP300-interacting inhibitor of differentiation 2 (236 aa).

Residues 1–15 (MSQLPAVSSAPQTGA) show a composition bias toward polar residues. The tract at residues 1 to 102 (MSQLPAVSSA…REGPAAAAAS (102 aa)) is disordered. 2 stretches are compositionally biased toward low complexity: residues 32 to 68 (RALP…GRVA) and 75 to 102 (AAAA…AAAS). Arg63 and Arg79 each carry omega-N-methylarginine. Positions 170 to 190 (RIQELEERRRRFVEACRAREA) form a coiled coil.

Heterodimer with EID2B. Interacts with the C-terminus of EP300. Interacts with HDAC1 and HDAC2. Interacts with SMAD2, SMAD4 and with the MH2 domain of SMAD3. Expressed in heart, brain, kidney and pancreas. Not detected in placenta.

The protein resides in the nucleus. Its function is as follows. Interacts with EP300 and acts as a repressor of MYOD-dependent transcription and muscle differentiation. Inhibits EP300 histone acetyltransferase activity. Acts as a repressor of TGFB/SMAD transcriptional responses. May act as a repressor of the TGFB/SMAD3-dependent signaling by selectively blocking formation of TGFB-induced SMAD3-SMAD4 complex. The chain is EP300-interacting inhibitor of differentiation 2 from Mus musculus (Mouse).